A 737-amino-acid chain; its full sequence is ATP-dependent RNA helicase SUV3, mitochondrial (737 aa).

Residues 1-25 constitute a mitochondrion transit peptide; the sequence is MTLVKYSTIAFPLRSFRLFIFVKKA. One can recognise a Helicase ATP-binding domain in the interval 226-365; the sequence is EARKIRRHII…KSVLPLVKSI (140 aa). 239–246 lines the ATP pocket; sequence GPTNSGKT. Residues 390–546 form the Helicase C-terminal domain; that stretch reads PVKDGIKGLR…YLKTAVTWPT (157 aa).

The protein belongs to the helicase family.

The protein resides in the mitochondrion. It catalyses the reaction ATP + H2O = ADP + phosphate + H(+). Probable ATP-dependent RNA helicase involved in a variety of mitochondrial post-transcriptional processes and in translation. It is a key control element in nuclear-mitochondrial interactions. The protein is ATP-dependent RNA helicase SUV3, mitochondrial (SUV3) of Saccharomyces paradoxus (Yeast).